The sequence spans 371 residues: Flagellar P-ring protein 1 (371 aa).

Positions Met1–Ala19 are cleaved as a signal peptide.

This sequence belongs to the FlgI family. The basal body constitutes a major portion of the flagellar organelle and consists of four rings (L,P,S, and M) mounted on a central rod.

The protein resides in the periplasm. It localises to the bacterial flagellum basal body. Its function is as follows. Assembles around the rod to form the L-ring and probably protects the motor/basal body from shearing forces during rotation. This is Flagellar P-ring protein 1 from Cereibacter sphaeroides (strain ATCC 17023 / DSM 158 / JCM 6121 / CCUG 31486 / LMG 2827 / NBRC 12203 / NCIMB 8253 / ATH 2.4.1.) (Rhodobacter sphaeroides).